A 238-amino-acid chain; its full sequence is Probable septum site-determining protein MinC (238 aa).

Belongs to the MinC family. In terms of assembly, interacts with MinD and FtsZ.

In terms of biological role, cell division inhibitor that blocks the formation of polar Z ring septums. Rapidly oscillates between the poles of the cell to destabilize FtsZ filaments that have formed before they mature into polar Z rings. Prevents FtsZ polymerization. In Blochmanniella floridana, this protein is Probable septum site-determining protein MinC.